A 476-amino-acid chain; its full sequence is MAMKIGTAAFKERVSEGIDNEFMRGAVSGAQERLRTRRLQAAEELGNWEDWRSHAEEIRQHVLDNLDFYLEQLAENVANRGGHVFFAETAEEASSYIRDVIRQKNAKKIVKSKSMVTEEINMNEVLEEEGCEVTETDLGEYILQIDDHDPPSHIVAPALHKNKEQIRDVFKERLEYKQTEKPEELVMHARSVLRKKFLEADVGITGCNFAIADTGSVSLVTNEGNGRLVSALPKTQITVMGMERIVPSFSEFEVLVSMLTRSAVGQRLTSYITALTGPRQQGEADGPEEFHLVVVDNGRSRILGTEFQSVLQCIRCAACINVCPVYRHVGGHSYGSIYSGPIGAVLSPLLGGYDEYKELPYASSLCAACTEACPVKIPLHELLLKHRQNIVEKEGKAPISEKLAMKAFGLGSSSPSLYKMGSKWAPAAMTPFTEDDKISKGPGPLKEWTAIRDFPAPHKSRFRDWFKDREKQKGEE.

4Fe-4S ferredoxin-type domains follow at residues 304–334 (GTEFQSVLQCIRCAACINVCPVYRHVGGHSY) and 353–382 (YDEYKELPYASSLCAACTEACPVKIPLHEL). 7 residues coordinate [4Fe-4S] cluster: cysteine 313, cysteine 316, cysteine 319, cysteine 323, cysteine 366, cysteine 369, and cysteine 373.

Belongs to the LutB/YkgF family.

Its function is as follows. Is involved in L-lactate degradation and allows cells to grow with lactate as the sole carbon source. Has probably a role as an electron transporter during oxidation of L-lactate. This Bacillus velezensis (strain DSM 23117 / BGSC 10A6 / LMG 26770 / FZB42) (Bacillus amyloliquefaciens subsp. plantarum) protein is Lactate utilization protein B.